The following is a 137-amino-acid chain: Integration host factor subunit beta (137 aa).

Residues 75–92 show a composition bias toward basic and acidic residues; sequence KRVPHFKAGKELRERVDR. The segment at 75–137 is disordered; it reads KRVPHFKAGK…EGGGLNLARS (63 aa). Positions 128 to 137 are enriched in gly residues; sequence EGGGLNLARS.

The protein belongs to the bacterial histone-like protein family. As to quaternary structure, heterodimer of an alpha and a beta chain.

This protein is one of the two subunits of integration host factor, a specific DNA-binding protein that functions in genetic recombination as well as in transcriptional and translational control. The protein is Integration host factor subunit beta of Cupriavidus pinatubonensis (strain JMP 134 / LMG 1197) (Cupriavidus necator (strain JMP 134)).